The primary structure comprises 303 residues: 4-diphosphocytidyl-2-C-methyl-D-erythritol kinase (303 aa).

Lysine 18 is an active-site residue. 111–121 (PVASGIGGGSA) contacts ATP. The active site involves aspartate 153.

Belongs to the GHMP kinase family. IspE subfamily.

It carries out the reaction 4-CDP-2-C-methyl-D-erythritol + ATP = 4-CDP-2-C-methyl-D-erythritol 2-phosphate + ADP + H(+). It participates in isoprenoid biosynthesis; isopentenyl diphosphate biosynthesis via DXP pathway; isopentenyl diphosphate from 1-deoxy-D-xylulose 5-phosphate: step 3/6. Its function is as follows. Catalyzes the phosphorylation of the position 2 hydroxy group of 4-diphosphocytidyl-2C-methyl-D-erythritol. This chain is 4-diphosphocytidyl-2-C-methyl-D-erythritol kinase, found in Sinorhizobium medicae (strain WSM419) (Ensifer medicae).